The primary structure comprises 602 residues: Threonine--tRNA ligase (602 aa).

Residues Asp208–Pro499 form a catalytic region. The Zn(2+) site is built by Cys300, His351, and His476.

This sequence belongs to the class-II aminoacyl-tRNA synthetase family. Homodimer. Zn(2+) serves as cofactor.

The protein resides in the cytoplasm. The enzyme catalyses tRNA(Thr) + L-threonine + ATP = L-threonyl-tRNA(Thr) + AMP + diphosphate + H(+). In terms of biological role, catalyzes the attachment of threonine to tRNA(Thr) in a two-step reaction: L-threonine is first activated by ATP to form Thr-AMP and then transferred to the acceptor end of tRNA(Thr). Also edits incorrectly charged L-seryl-tRNA(Thr). The protein is Threonine--tRNA ligase of Campylobacter jejuni (strain RM1221).